Consider the following 439-residue polypeptide: DNA primase DnaG (439 aa).

The region spanning Asp169–Tyr243 is the Toprim domain. 3 residues coordinate Mg(2+): Glu175, Asp217, and Asp219.

This sequence belongs to the archaeal DnaG primase family. As to quaternary structure, forms a ternary complex with MCM helicase and DNA. Mg(2+) is required as a cofactor.

The enzyme catalyses ssDNA + n NTP = ssDNA/pppN(pN)n-1 hybrid + (n-1) diphosphate.. In terms of biological role, RNA polymerase that catalyzes the synthesis of short RNA molecules used as primers for DNA polymerase during DNA replication. In Methanococcus maripaludis (strain C7 / ATCC BAA-1331), this protein is DNA primase DnaG.